The chain runs to 174 residues: Superoxide dismutase [Cu-Zn] (174 aa).

An N-terminal signal peptide occupies residues 1 to 23 (MIRLSAAAALGLAAALAASPALA). Residues His-68, His-70, and His-86 each contribute to the Cu cation site. Cys-75 and Cys-170 are joined by a disulfide. His-86, His-95, Asp-104, and Asp-107 together coordinate Zn(2+). Residue His-150 coordinates Cu cation.

Belongs to the Cu-Zn superoxide dismutase family. In terms of assembly, homodimer. It depends on Cu cation as a cofactor. Zn(2+) serves as cofactor.

It is found in the periplasm. The enzyme catalyses 2 superoxide + 2 H(+) = H2O2 + O2. Its function is as follows. Destroys radicals which are normally produced within the cells and which are toxic to biological systems. May function against extracytoplasmic toxic oxygen species. The protein is Superoxide dismutase [Cu-Zn] (sodC) of Caulobacter vibrioides (strain ATCC 19089 / CIP 103742 / CB 15) (Caulobacter crescentus).